Consider the following 145-residue polypeptide: D-aminoacyl-tRNA deacylase (145 aa).

The Gly-cisPro motif, important for rejection of L-amino acids signature appears at 137 to 138 (GP).

Belongs to the DTD family. Homodimer.

The protein localises to the cytoplasm. The enzyme catalyses glycyl-tRNA(Ala) + H2O = tRNA(Ala) + glycine + H(+). It catalyses the reaction a D-aminoacyl-tRNA + H2O = a tRNA + a D-alpha-amino acid + H(+). An aminoacyl-tRNA editing enzyme that deacylates mischarged D-aminoacyl-tRNAs. Also deacylates mischarged glycyl-tRNA(Ala), protecting cells against glycine mischarging by AlaRS. Acts via tRNA-based rather than protein-based catalysis; rejects L-amino acids rather than detecting D-amino acids in the active site. By recycling D-aminoacyl-tRNA to D-amino acids and free tRNA molecules, this enzyme counteracts the toxicity associated with the formation of D-aminoacyl-tRNA entities in vivo and helps enforce protein L-homochirality. This Pseudomonas putida (strain ATCC 47054 / DSM 6125 / CFBP 8728 / NCIMB 11950 / KT2440) protein is D-aminoacyl-tRNA deacylase.